The primary structure comprises 186 residues: Elongation factor P (186 aa).

It belongs to the elongation factor P family.

It localises to the cytoplasm. Its pathway is protein biosynthesis; polypeptide chain elongation. Functionally, involved in peptide bond synthesis. Stimulates efficient translation and peptide-bond synthesis on native or reconstituted 70S ribosomes in vitro. Probably functions indirectly by altering the affinity of the ribosome for aminoacyl-tRNA, thus increasing their reactivity as acceptors for peptidyl transferase. The chain is Elongation factor P from Beutenbergia cavernae (strain ATCC BAA-8 / DSM 12333 / CCUG 43141 / JCM 11478 / NBRC 16432 / NCIMB 13614 / HKI 0122).